Here is a 270-residue protein sequence, read N- to C-terminus: Interleukin-1 alpha (270 aa).

Positions 1–112 (MAKVPDLFED…EVEEEIMKPR (112 aa)) are excised as a propeptide. Position 82 is an N6-acetyllysine (lysine 82). The interval 82–86 (KKRRL) is nuclear localization signal (NLS). Phosphoserine is present on serine 87. Residue asparagine 139 is glycosylated (N-linked (GlcNAc...) asparagine).

The protein belongs to the IL-1 family. As to quaternary structure, monomer. Interacts with TMED10; the interaction mediates the translocation from the cytoplasm into the ERGIC (endoplasmic reticulum-Golgi intermediate compartment) and thereby secretion. Interacts with IL1R1. Interacts with S100A13; this interaction is the first step in the export of IL1A, followed by direct translocation of this complex across the plasma membrane. In terms of processing, acetylated within its nuclear localization sequence, which impacts subcellular localization. Proteolytic processed by CAPN1 in a calcium-dependent manner. Cleavage from 31 kDa precursor to 18 kDa biologically active molecules. Post-translationally, phosphorylated. Phosphorylation greatly enhances susceptibility to digestion and promotes the conversion of pre-IL1A alpha to the biologically active IL1A.

It localises to the nucleus. The protein resides in the cytoplasm. It is found in the secreted. In terms of biological role, cytokine constitutively present intracellularly in nearly all resting non-hematopoietic cells that plays an important role in inflammation and bridges the innate and adaptive immune systems. After binding to its receptor IL1R1 together with its accessory protein IL1RAP, forms the high affinity interleukin-1 receptor complex. Signaling involves the recruitment of adapter molecules such as MYD88, IRAK1 or IRAK4. In turn, mediates the activation of NF-kappa-B and the three MAPK pathways p38, p42/p44 and JNK pathways. Within the cell, acts as an alarmin and cell death results in its liberation in the extracellular space after disruption of the cell membrane to induce inflammation and alert the host to injury or damage. In addition to its role as a danger signal, which occurs when the cytokine is passively released by cell necrosis, directly senses DNA damage and acts as signal for genotoxic stress without loss of cell integrity. This Felis catus (Cat) protein is Interleukin-1 alpha (IL1A).